The chain runs to 110 residues: U1-lycotoxin-Ls1aa (110 aa).

Positions 1-20 are cleaved as a signal peptide; that stretch reads MKFVLLFGVLLVTLFSYSSA. A propeptide spanning residues 21-44 is cleaved from the precursor; that stretch reads EMLDDFDQADEDELLSLIEKEEAR. 4 disulfide bridges follow: cysteine 47/cysteine 62, cysteine 54/cysteine 71, cysteine 61/cysteine 89, and cysteine 73/cysteine 87.

It belongs to the neurotoxin 19 (CSTX) family. 03 subfamily. In terms of tissue distribution, expressed by the venom gland.

The protein localises to the secreted. This chain is U1-lycotoxin-Ls1aa, found in Lycosa singoriensis (Wolf spider).